A 248-amino-acid chain; its full sequence is Triosephosphate isomerase (248 aa).

Substrate contacts are provided by N12 and K14. The segment at 16–30 is igE-binding; the sequence is NGDRAGIDSIISFMK. The active-site Electrophile is H95. The active-site Proton acceptor is E165. 2 igE-binding regions span residues 166 to 180 and 205 to 219; these read PVWA…TPEQ and RIIY…NCKE.

Belongs to the triosephosphate isomerase family. In terms of assembly, homodimer. In terms of tissue distribution, expressed in skeletal muscle (at protein level).

It localises to the cytoplasm. The catalysed reaction is D-glyceraldehyde 3-phosphate = dihydroxyacetone phosphate. It carries out the reaction dihydroxyacetone phosphate = methylglyoxal + phosphate. It functions in the pathway carbohydrate biosynthesis; gluconeogenesis. It participates in carbohydrate degradation; glycolysis; D-glyceraldehyde 3-phosphate from glycerone phosphate: step 1/1. Functionally, triosephosphate isomerase is an extremely efficient metabolic enzyme that catalyzes the interconversion between dihydroxyacetone phosphate (DHAP) and D-glyceraldehyde-3-phosphate (G3P) in glycolysis and gluconeogenesis. Its function is as follows. It is also responsible for the non-negligible production of methylglyoxal a reactive cytotoxic side-product that modifies and can alter proteins, DNA and lipids. The chain is Triosephosphate isomerase from Procambarus clarkii (Red swamp crayfish).